The primary structure comprises 312 residues: Fibrinogen-like protein 1 (312 aa).

An N-terminal signal peptide occupies residues 1-22 (MAKVFSFILVTTALTMGREISA). Residues 23 to 61 (LEDCAQEQMRLRAQVRLLETRVKQQQVKIKQLLQENEVQ) are a coiled coil. The region spanning 74–306 (LGSKRQYADC…SVVMKIRPND (233 aa)) is the Fibrinogen C-terminal domain. 2 disulfides stabilise this stretch: cysteine 83–cysteine 112 and cysteine 248–cysteine 261.

Homodimer. Interacts (via the Fibrinogen C-terminal domain) with LAG3 (via Ig-like domains 1 and 2). In terms of tissue distribution, under normal conditions, liver-specific.

It is found in the secreted. Functionally, immune suppressive molecule that inhibits antigen-specific T-cell activation by acting as a major ligand of LAG3. Responsible for LAG3 T-cell inhibitory function. Binds LAG3 independently from MHC class II (MHC-II). Secreted by, and promotes growth of, hepatocytes. In Homo sapiens (Human), this protein is Fibrinogen-like protein 1.